The sequence spans 301 residues: Putative glycosyltransferase MJ1113 (301 aa).

Transmembrane regions (helical) follow at residues 2–22 (GHYF…SAVL), 62–82 (FIPF…IIGI), 95–115 (LILL…NSYV), 117–137 (LIEI…TNML), 140–160 (FNGL…LVLF), 164–184 (YTTG…LLIF), 191–211 (VFPG…LAVV), and 280–300 (VTVL…ISLI).

Belongs to the glycosyltransferase 4 family.

Its subcellular location is the cell membrane. This is Putative glycosyltransferase MJ1113 from Methanocaldococcus jannaschii (strain ATCC 43067 / DSM 2661 / JAL-1 / JCM 10045 / NBRC 100440) (Methanococcus jannaschii).